The following is a 270-amino-acid chain: 4-hydroxy-tetrahydrodipicolinate reductase (270 aa).

NAD(+) contacts are provided by residues 8-13 (GALGRM), aspartate 34, 102-104 (GTT), and 128-131 (SQNY). Residue histidine 160 is the Proton donor/acceptor of the active site. Histidine 161 is a binding site for (S)-2,3,4,5-tetrahydrodipicolinate. Residue lysine 164 is the Proton donor of the active site. 170–171 (GT) contacts (S)-2,3,4,5-tetrahydrodipicolinate.

It belongs to the DapB family.

The protein localises to the cytoplasm. It catalyses the reaction (S)-2,3,4,5-tetrahydrodipicolinate + NAD(+) + H2O = (2S,4S)-4-hydroxy-2,3,4,5-tetrahydrodipicolinate + NADH + H(+). It carries out the reaction (S)-2,3,4,5-tetrahydrodipicolinate + NADP(+) + H2O = (2S,4S)-4-hydroxy-2,3,4,5-tetrahydrodipicolinate + NADPH + H(+). It participates in amino-acid biosynthesis; L-lysine biosynthesis via DAP pathway; (S)-tetrahydrodipicolinate from L-aspartate: step 4/4. Functionally, catalyzes the conversion of 4-hydroxy-tetrahydrodipicolinate (HTPA) to tetrahydrodipicolinate. This chain is 4-hydroxy-tetrahydrodipicolinate reductase, found in Methanococcus maripaludis (strain C5 / ATCC BAA-1333).